We begin with the raw amino-acid sequence, 300 residues long: Transcription factor Sox-3 (300 aa).

Positions 1–35 are disordered; that stretch reads MYNMMETEIKSPIPQSNTGSVTGGKNNSANDQDRV. A compositionally biased stretch (polar residues) spans 13-30; it reads IPQSNTGSVTGGKNNSAN. Positions 35 to 103 form a DNA-binding region, HMG box; it reads VKRPMNAFMV…MHMKEHPDYK (69 aa). Phosphoserine is present on serine 235. Positions 251 to 262 match the 9aaTAD motif; it reads DLRDMISMYLPP.

The protein localises to the nucleus. Its function is as follows. Transcriptional activator. This Danio rerio (Zebrafish) protein is Transcription factor Sox-3.